Here is a 387-residue protein sequence, read N- to C-terminus: Phosphoglycerate kinase (387 aa).

Substrate-binding positions include 21–23, Arg36, 59–62, Arg113, and Arg146; these read DLN and HLGR. ATP is bound by residues Lys197, Glu314, and 340 to 343; that span reads GGDT.

The protein belongs to the phosphoglycerate kinase family. As to quaternary structure, monomer.

It localises to the cytoplasm. It catalyses the reaction (2R)-3-phosphoglycerate + ATP = (2R)-3-phospho-glyceroyl phosphate + ADP. Its pathway is carbohydrate degradation; glycolysis; pyruvate from D-glyceraldehyde 3-phosphate: step 2/5. The chain is Phosphoglycerate kinase from Pectobacterium carotovorum subsp. carotovorum (strain PC1).